The following is a 535-amino-acid chain: Dimethylaniline monooxygenase [N-oxide-forming] 2 (535 aa).

Alanine 2 is modified (N-acetylalanine). FAD contacts are provided by residues 9–13 (GAGVS), glutamate 32, 40–41 (VW), and 61–62 (NT). Residues 60–61 (TN) and 195–198 (SGSD) contribute to the NADP(+) site. Lysine 492 is covalently cross-linked (Glycyl lysine isopeptide (Lys-Gly) (interchain with G-Cter in SUMO)). The chain crosses the membrane as a helical span at residues 510–530 (FSVSFLLKILGLLAVVVAFFC).

This sequence belongs to the FMO family. It depends on FAD as a cofactor. Requires Mg(2+) as cofactor.

Its subcellular location is the microsome membrane. The protein resides in the endoplasmic reticulum membrane. Its function is as follows. Catalyzes the oxidative metabolism of numerous xenobiotics, including mainly therapeutic drugs and insecticides that contain a soft nucleophile, most commonly nitrogen and sulfur and participates to their bioactivation. The polypeptide is Dimethylaniline monooxygenase [N-oxide-forming] 2 (Pan troglodytes (Chimpanzee)).